Reading from the N-terminus, the 367-residue chain is Beta sliding clamp (367 aa).

The protein belongs to the beta sliding clamp family. In terms of assembly, forms a ring-shaped head-to-tail homodimer around DNA which binds and tethers DNA polymerases and other proteins to the DNA. The DNA replisome complex has a single clamp-loading complex (3 tau and 1 each of delta, delta', psi and chi subunits) which binds 3 Pol III cores (1 core on the leading strand and 2 on the lagging strand) each with a beta sliding clamp dimer. Additional proteins in the replisome are other copies of gamma, psi and chi, Ssb, DNA helicase and RNA primase.

The protein resides in the cytoplasm. Confers DNA tethering and processivity to DNA polymerases and other proteins. Acts as a clamp, forming a ring around DNA (a reaction catalyzed by the clamp-loading complex) which diffuses in an ATP-independent manner freely and bidirectionally along dsDNA. Initially characterized for its ability to contact the catalytic subunit of DNA polymerase III (Pol III), a complex, multichain enzyme responsible for most of the replicative synthesis in bacteria; Pol III exhibits 3'-5' exonuclease proofreading activity. The beta chain is required for initiation of replication as well as for processivity of DNA replication. This chain is Beta sliding clamp (dnaN), found in Pseudomonas putida (strain ATCC 47054 / DSM 6125 / CFBP 8728 / NCIMB 11950 / KT2440).